The sequence spans 165 residues: Transmembrane protein 128 (165 aa).

Transmembrane regions (helical) follow at residues 49–69, 81–101, 119–139, and 144–164; these read NIHS…VDFF, WFLF…YCIV, LIPI…VALW, and FFTP…TSLL.

The protein localises to the membrane. In Bos taurus (Bovine), this protein is Transmembrane protein 128 (TMEM128).